The sequence spans 300 residues: Ribosomal protein bS6--L-glutamate ligase (300 aa).

Residues 104–287 (MQLLARQGID…IAGKMIRWIE (184 aa)) form the ATP-grasp domain. Residues K141, 178–179 (EY), D187, and 211–213 (RSN) contribute to the ATP site. Positions 248, 260, and 262 each coordinate Mg(2+). Mn(2+)-binding residues include D248, E260, and N262.

Belongs to the RimK family. Mg(2+) is required as a cofactor. Requires Mn(2+) as cofactor.

Its function is as follows. An L-glutamate ligase that catalyzes the ATP-dependent post-translational addition of glutamate residues to the C-terminus of ribosomal protein bS6 (RpsF). Is also able to catalyze the synthesis of poly-alpha-glutamate in vitro, via ATP hydrolysis from unprotected glutamate as substrate. The number of glutamate residues added to either RpsF or to poly-alpha-glutamate changes with pH. The chain is Ribosomal protein bS6--L-glutamate ligase from Shigella flexneri serotype 5b (strain 8401).